The primary structure comprises 143 residues: Photosystem II extrinsic protein U (143 aa).

Positions 1-29 are cleaved as a signal peptide; sequence MKRLVGVLMILGLMLTSWGLLGSPQTAIA. Positions 30 to 44 are excised as a propeptide; that stretch reads ASLSPLSFNPSPVLA.

This sequence belongs to the PsbU family. In terms of assembly, PSII is composed of 1 copy each of membrane proteins PsbA, PsbB, PsbC, PsbD, PsbE, PsbF, PsbH, PsbI, PsbJ, PsbK, PsbL, PsbM, PsbT, PsbX, PsbY, PsbZ, Psb30/Ycf12, peripheral proteins PsbO, CyanoQ (PsbQ), PsbU, PsbV and a large number of cofactors. It forms dimeric complexes.

The protein localises to the cellular thylakoid membrane. Functionally, one of the extrinsic, lumenal subunits of photosystem II (PSII). PSII is a light-driven water plastoquinone oxidoreductase, using light energy to abstract electrons from H(2)O, generating a proton gradient subsequently used for ATP formation. The extrinsic proteins stabilize the structure of photosystem II oxygen-evolving complex (OEC), the ion environment of oxygen evolution and protect the OEC against heat-induced inactivation. This is Photosystem II extrinsic protein U from Leptolyngbya laminosa (Phormidium laminosum).